The primary structure comprises 61 residues: Large ribosomal subunit protein eL24 (61 aa).

4 residues coordinate Zn(2+): cysteine 7, cysteine 10, cysteine 33, and cysteine 37. The segment at 7–37 (CSFCGHEIPPGTGLMYVRNDGTMLWFCSSKC) adopts a C4-type zinc-finger fold.

This sequence belongs to the eukaryotic ribosomal protein eL24 family. In terms of assembly, part of the 50S ribosomal subunit. Forms a cluster with proteins L3 and L14. Requires Zn(2+) as cofactor.

Functionally, binds to the 23S rRNA. This is Large ribosomal subunit protein eL24 from Saccharolobus islandicus (strain M.16.27) (Sulfolobus islandicus).